Reading from the N-terminus, the 206-residue chain is Large ribosomal subunit protein uL3 (206 aa).

It belongs to the universal ribosomal protein uL3 family. In terms of assembly, part of the 50S ribosomal subunit. Forms a cluster with proteins L14 and L19.

Functionally, one of the primary rRNA binding proteins, it binds directly near the 3'-end of the 23S rRNA, where it nucleates assembly of the 50S subunit. The sequence is that of Large ribosomal subunit protein uL3 from Thermus thermophilus (strain ATCC BAA-163 / DSM 7039 / HB27).